We begin with the raw amino-acid sequence, 143 residues long: Nucleoside diphosphate kinase (143 aa).

ATP contacts are provided by Lys11, Phe59, Arg87, Thr93, Arg104, and Asn114. His117 serves as the catalytic Pros-phosphohistidine intermediate.

This sequence belongs to the NDK family. As to quaternary structure, homotetramer. The cofactor is Mg(2+).

Its subcellular location is the cytoplasm. The catalysed reaction is a 2'-deoxyribonucleoside 5'-diphosphate + ATP = a 2'-deoxyribonucleoside 5'-triphosphate + ADP. It catalyses the reaction a ribonucleoside 5'-diphosphate + ATP = a ribonucleoside 5'-triphosphate + ADP. Functionally, major role in the synthesis of nucleoside triphosphates other than ATP. The ATP gamma phosphate is transferred to the NDP beta phosphate via a ping-pong mechanism, using a phosphorylated active-site intermediate. The polypeptide is Nucleoside diphosphate kinase (Ectopseudomonas mendocina (strain ymp) (Pseudomonas mendocina)).